Consider the following 350-residue polypeptide: Renin receptor (350 aa).

The signal sequence occupies residues methionine 1–glycine 17. The Extracellular segment spans residues asparagine 18 to glutamate 302. The chain crosses the membrane as a helical span at residues tyrosine 303–isoleucine 323. Residues threonine 324–aspartate 350 lie on the Cytoplasmic side of the membrane. The Mediates retrograde transport to the ER signature appears at lysine 346–aspartate 350.

As to quaternary structure, interacts with renin. Accessory component of the multisubunit proton-transporting vacuolar (V)-ATPase protein pump. Interacts (via N-terminus) with ATP6AP1 (via N-terminus). Interacts with ATP6V0D1; ATP6V0D1 is a V-ATPase complex subunit and the interaction promotes V-ATPase complex assembly. Interacts with TMEM9; TMEM9 is a V-ATPase assembly regulator and the interaction induces the interaction with ATP6V0D1. Interacts with VMA21 (via N-terminus); VMA21 is a V-ATPase accessory component. In terms of processing, phosphorylated. Post-translationally, proteolytically cleaved by a furin-like convertase in the trans-Golgi network to generate N- and C-terminal fragments. In terms of tissue distribution, expressed in glutamatergic and GABAergic neurons with highest levels in the cortex, the hippocampus, the medial habenular nucleus, the cerebellum, the medulla and the olfactory bulb (at protein level).

The protein resides in the endoplasmic reticulum membrane. It localises to the lysosome membrane. The protein localises to the cytoplasmic vesicle. It is found in the autophagosome membrane. Its subcellular location is the cell projection. The protein resides in the dendritic spine membrane. It localises to the axon. The protein localises to the endosome membrane. It is found in the clathrin-coated vesicle membrane. Its subcellular location is the secretory vesicle. The protein resides in the synaptic vesicle membrane. Multifunctional protein which functions as a renin, prorenin cellular receptor and is involved in the assembly of the lysosomal proton-transporting V-type ATPase (V-ATPase) and the acidification of the endo-lysosomal system. May mediate renin-dependent cellular responses by activating ERK1 and ERK2. By increasing the catalytic efficiency of renin in AGT/angiotensinogen conversion to angiotensin I, may also play a role in the renin-angiotensin system (RAS). Through its function in V-type ATPase (v-ATPase) assembly and acidification of the lysosome it regulates protein degradation and may control different signaling pathways important for proper brain development, synapse morphology and synaptic transmission. The sequence is that of Renin receptor from Mus musculus (Mouse).